A 104-amino-acid chain; its full sequence is Glutaredoxin-C15 (104 aa).

Positions 1-103 constitute a Glutaredoxin domain; it reads MERVAKLSTE…PMLKAAGAIW (103 aa). Cys-21 and Cys-24 are disulfide-bonded.

It belongs to the glutaredoxin family. CC-type subfamily.

It is found in the cytoplasm. Its function is as follows. Has a glutathione-disulfide oxidoreductase activity in the presence of NADPH and glutathione reductase. Reduces low molecular weight disulfides and proteins. This is Glutaredoxin-C15 (GRXC15) from Oryza sativa subsp. japonica (Rice).